We begin with the raw amino-acid sequence, 219 residues long: Casparian strip membrane protein 3 (219 aa).

The segment at 1 to 43 (MDPGREDEVPLAATSPESRRTRSNGRGKATVGDAPPPAETVVS) is disordered. Topologically, residues 1-57 (MDPGREDEVPLAATSPESRRTRSNGRGKATVGDAPPPAETVVSTKAAPLPTGGWKKG) are cytoplasmic. Residues 58 to 78 (IAILDFILRLGAIGAAMGASI) form a helical membrane-spanning segment. The Extracellular segment spans residues 79-108 (LMGTNEQILPFFTQFLQFHAQWDDFPVFKL). The chain crosses the membrane as a helical span at residues 109–129 (FVVLNALAGGFLILSLPLSIV). Residues 130 to 147 (CIVRPLAVGPRFLLLITD) lie on the Cytoplasmic side of the membrane. A helical membrane pass occupies residues 148–168 (LVNMATVIAAASAAAAIVYVA). Residues 169-193 (HNGSQDANWIAICQQFTDFCQGTSE) are Extracellular-facing. N-linked (GlcNAc...) asparagine glycosylation occurs at Asn170. Residues 194-214 (AVVVSFVAAVFLVCLIVVSTL) form a helical membrane-spanning segment. Over 215-219 (ALKRT) the chain is Cytoplasmic.

The protein belongs to the Casparian strip membrane proteins (CASP) family. In terms of assembly, homodimer and heterodimers.

It localises to the cell membrane. Regulates membrane-cell wall junctions and localized cell wall deposition. Required for establishment of the Casparian strip membrane domain (CSD) and the subsequent formation of Casparian strips, a cell wall modification of the root endodermis that determines an apoplastic barrier between the intraorganismal apoplasm and the extraorganismal apoplasm and prevents lateral diffusion. The polypeptide is Casparian strip membrane protein 3 (Lotus japonicus (Lotus corniculatus var. japonicus)).